The following is a 333-amino-acid chain: Fatty acid hydroxylase domain-containing protein 2 (333 aa).

Transmembrane regions (helical) follow at residues 29-49 (FILG…TWHL), 77-97 (ILFF…FNGL), 134-154 (TVLF…YPFL), 168-188 (FHWF…LFYY), 215-235 (VISL…PVIV), and 237-257 (PLVM…ALII). The Fatty acid hydroxylase domain occupies 176–299 (AIFTLIEEVL…LGVLDHLHGT (124 aa)).

This sequence belongs to the sterol desaturase family. As to expression, down-regulated in primary acute myeloid leukemia (AML) patients.

The protein resides in the cytoplasm. It is found in the membrane. Promotes megakaryocyte differentiation by enhancing ERK phosphorylation and up-regulating RUNX1 expression. This is Fatty acid hydroxylase domain-containing protein 2 (FAXDC2) from Homo sapiens (Human).